A 147-amino-acid chain; its full sequence is Transcriptional regulator MraZ (147 aa).

SpoVT-AbrB domains lie at 5–52 (SHAI…PETE) and 81–124 (ATTL…SEEA).

Belongs to the MraZ family. As to quaternary structure, forms oligomers.

The protein resides in the cytoplasm. It localises to the nucleoid. The polypeptide is Transcriptional regulator MraZ (Saccharophagus degradans (strain 2-40 / ATCC 43961 / DSM 17024)).